We begin with the raw amino-acid sequence, 1289 residues long: Trafficking protein particle complex II-specific subunit 120 (1289 aa).

The span at 354–365 (STGISPVDSNSK) shows a compositional bias: polar residues. Residues 354 to 374 (STGISPVDSNSKATASTTASS) are disordered. Ser379 and Ser387 each carry phosphoserine.

Belongs to the TRS120 family. As to quaternary structure, part of the multisubunit TRAPP (transport protein particle) II complex composed of BET3, BET5, TRS20, TRS23, TRS31, TRS33, TRS65, TRS120 and TRS130. Interacts directly with TRS65.

The protein resides in the golgi apparatus. Its subcellular location is the cis-Golgi network. In terms of biological role, specific subunit of the TRAPP II complex, a highly conserved vesicle tethering complex that functions in the late Golgi as a guanine nucleotide exchanger (GEF) for the Golgi YPT1 GTPase. TRS120 plays a role in the YPT GEF activity of TRAPP II in concert with the two other TRAPP II-specific subunits TRS65 and TRS130. The sequence is that of Trafficking protein particle complex II-specific subunit 120 (TRS120) from Saccharomyces cerevisiae (strain ATCC 204508 / S288c) (Baker's yeast).